A 289-amino-acid polypeptide reads, in one-letter code: Glucosamine-6-phosphate deaminase 1 (289 aa).

D72 acts as the Proton acceptor; for enolization step in catalysis. D141 (for ring-opening step) is an active-site residue. H143 (proton acceptor; for ring-opening step) is an active-site residue. E148 (for ring-opening step) is an active-site residue. T161 carries the post-translational modification Phosphothreonine.

Belongs to the glucosamine/galactosamine-6-phosphate isomerase family. As to quaternary structure, homohexamer. As to expression, widely expressed. Detected in brain, liver, kidney, muscle, ovary, testis, spermatids and spermatozoa. In spermatids, located close to the developing acrosome vesicle. In spermatozoa, found close to the acrosomal region.

The protein localises to the cytoplasm. It catalyses the reaction alpha-D-glucosamine 6-phosphate + H2O = beta-D-fructose 6-phosphate + NH4(+). Its pathway is nucleotide-sugar biosynthesis; UDP-N-acetyl-alpha-D-glucosamine biosynthesis; alpha-D-glucosamine 6-phosphate from D-fructose 6-phosphate: step 1/1. Its activity is regulated as follows. Allosterically activated by N-acetylglucosamine-6-phosphate (GlcNAc6P). Functionally, catalyzes the reversible conversion of alpha-D-glucosamine 6-phosphate (GlcN-6P) into beta-D-fructose 6-phosphate (Fru-6P) and ammonium ion, a regulatory reaction step in de novo uridine diphosphate-N-acetyl-alpha-D-glucosamine (UDP-GlcNAc) biosynthesis via hexosamine pathway. Deamination is coupled to aldo-keto isomerization mediating the metabolic flux from UDP-GlcNAc toward Fru-6P. At high ammonium level can drive amination and isomerization of Fru-6P toward hexosamines and UDP-GlcNAc synthesis. Has a role in fine tuning the metabolic fluctuations of cytosolic UDP-GlcNAc and their effects on hyaluronan synthesis that occur during tissue remodeling. Seems to trigger calcium oscillations in mammalian eggs. These oscillations serve as the essential trigger for egg activation and early development of the embryo. In Mus musculus (Mouse), this protein is Glucosamine-6-phosphate deaminase 1.